Here is a 307-residue protein sequence, read N- to C-terminus: Transaldolase (307 aa).

The active-site Schiff-base intermediate with substrate is the K125.

It belongs to the transaldolase family. Type 1 subfamily. As to quaternary structure, homodimer.

It localises to the cytoplasm. The enzyme catalyses D-sedoheptulose 7-phosphate + D-glyceraldehyde 3-phosphate = D-erythrose 4-phosphate + beta-D-fructose 6-phosphate. It functions in the pathway carbohydrate degradation; pentose phosphate pathway; D-glyceraldehyde 3-phosphate and beta-D-fructose 6-phosphate from D-ribose 5-phosphate and D-xylulose 5-phosphate (non-oxidative stage): step 2/3. Transaldolase is important for the balance of metabolites in the pentose-phosphate pathway. The chain is Transaldolase from Pseudomonas aeruginosa (strain LESB58).